The primary structure comprises 890 residues: Kinesin-like protein KIN-7C, mitochondrial (890 aa).

The segment covering 1–13 has biased composition (polar residues); the sequence is MSATRSQRSSTIS. The tract at residues 1-66 is disordered; that stretch reads MSATRSQRSS…TSSAAASSTA (66 aa). The N-terminal 73 residues, 1-73, are a transit peptide targeting the mitochondrion; sequence MSATRSQRSS…STAVASTKLK (73 aa). A compositionally biased stretch (low complexity) spans 40–66; it reads SPVTSSSPLLRSSPSPSTSSAAASSTA. One can recognise a Kinesin motor domain in the interval 75-394; that stretch reads NITVTIRFRP…LKFAQRCKHV (320 aa). ATP is bound at residue 155–162; sequence GVTSSGKT. Residues 395-468 are a coiled coil; the sequence is EIKASRNKIM…MGRIQRLTKL (74 aa). Residues 511–595 form a disordered region; that stretch reads DGAVSTVSEH…TTRRENAAAI (85 aa). Over residues 569-579 the composition is skewed to low complexity; sequence SQASGSPSSSS. 2 coiled-coil regions span residues 664-693 and 729-765; these read HIRD…IIEI and ADNR…LAER. The tract at residues 768–797 is disordered; sequence TQQIAGDESSGKNIHNRNGEESEIYSGAGT. Positions 818–884 form a coiled coil; the sequence is NETALNSQAL…AEEVTRLCNE (67 aa).

It belongs to the TRAFAC class myosin-kinesin ATPase superfamily. Kinesin family. KIN-7 subfamily.

It is found in the mitochondrion. The sequence is that of Kinesin-like protein KIN-7C, mitochondrial from Arabidopsis thaliana (Mouse-ear cress).